We begin with the raw amino-acid sequence, 638 residues long: 1-deoxy-D-xylulose-5-phosphate synthase (638 aa).

Residues H78 and 119–121 (GHS) each bind thiamine diphosphate. D151 lines the Mg(2+) pocket. Residues 152 to 153 (GA), N180, Y289, and E371 each bind thiamine diphosphate. Position 180 (N180) interacts with Mg(2+).

Belongs to the transketolase family. DXPS subfamily. As to quaternary structure, homodimer. Requires Mg(2+) as cofactor. The cofactor is thiamine diphosphate.

It carries out the reaction D-glyceraldehyde 3-phosphate + pyruvate + H(+) = 1-deoxy-D-xylulose 5-phosphate + CO2. Its pathway is metabolic intermediate biosynthesis; 1-deoxy-D-xylulose 5-phosphate biosynthesis; 1-deoxy-D-xylulose 5-phosphate from D-glyceraldehyde 3-phosphate and pyruvate: step 1/1. Catalyzes the acyloin condensation reaction between C atoms 2 and 3 of pyruvate and glyceraldehyde 3-phosphate to yield 1-deoxy-D-xylulose-5-phosphate (DXP). The protein is 1-deoxy-D-xylulose-5-phosphate synthase of Bartonella bacilliformis (strain ATCC 35685 / KC583 / Herrer 020/F12,63).